Here is a 374-residue protein sequence, read N- to C-terminus: 1,3,6,8-tetrahydroxynaphthalene synthase (374 aa).

Cys138 is an active-site residue.

Belongs to the thiolase-like superfamily. Chalcone/stilbene synthases family. In terms of assembly, homodimer.

It catalyses the reaction 5 malonyl-CoA + 5 H(+) = naphthalene-1,3,6,8-tetrol + 5 CO2 + 5 CoA + H2O. The protein operates within pigment biosynthesis; melanin biosynthesis. In terms of biological role, involved in the biosynthesis of melanin but also various secondary metabolites containing a naphthoquinone ring. Catalyzes the iterative condensation of five CoA-linked malonyl units to form a pentaketide intermediate. THNS subsequently catalyzes the dual intramolecular Claisen and aldol condensations of this linear intermediate to produce the fused ring of 1,3,6,8-tetrahydroxynaphthalene (THN). This Streptomyces coelicolor (strain ATCC BAA-471 / A3(2) / M145) protein is 1,3,6,8-tetrahydroxynaphthalene synthase.